The primary structure comprises 570 residues: Laccase-3 (570 aa).

Positions 1–25 (MESFRRFSLLSFIALLAYFAFLASA) are cleaved as a signal peptide. Plastocyanin-like domains are found at residues 33–149 (VITP…PRLG) and 159–310 (RDIP…YVNA). Residue N79 is glycosylated (N-linked (GlcNAc...) asparagine). Cu cation-binding residues include H83, H85, H128, and H130. Residues N188, N298, N332, N383, N393, and N433 are each glycosylated (N-linked (GlcNAc...) asparagine). The Plastocyanin-like 3 domain occupies 419-554 (DFPPVPPVQF…AMVFLVENGR (136 aa)). Cu cation is bound by residues H471, H474, H476, H533, C534, H535, and H539.

Belongs to the multicopper oxidase family. Cu cation is required as a cofactor. As to expression, mostly expressed in roots and siliques.

The protein localises to the secreted. It localises to the extracellular space. Its subcellular location is the apoplast. The enzyme catalyses 4 hydroquinone + O2 = 4 benzosemiquinone + 2 H2O. In terms of biological role, lignin degradation and detoxification of lignin-derived products. This is Laccase-3 (LAC3) from Arabidopsis thaliana (Mouse-ear cress).